Here is a 639-residue protein sequence, read N- to C-terminus: Sperm-associated antigen 16 protein (639 aa).

Positions 146–218 form a coiled coil; the sequence is DVYSQVMLLE…GLKLHYASYE (73 aa). The tract at residues 280 to 333 is disordered; it reads RESGDRAGHSCEKENSSEGPTQKSLREAREEVGYKSKLKNEKKDSEFPVDMQPD. Composition is skewed to basic and acidic residues over residues 281–295 and 303–325; these read ESGD…KENS and SLRE…KDSE. WD repeat units follow at residues 358 to 397, 400 to 439, 442 to 481, 484 to 523, 526 to 565, 568 to 608, and 609 to 639; these read LHEL…VLLT, GHTD…CTLT, GHNH…CRYT, GHTD…CEQS, GHMH…PIVS, VGPS…HKLV, and GHES…RLWI.

As to quaternary structure, interacts with SPAG6 and STK36. Post-translationally, phosphorylated by TSSK2. Expressed in testis.

It is found in the cytoplasm. The protein localises to the cytoskeleton. The protein resides in the cilium axoneme. Its subcellular location is the flagellum axoneme. It localises to the cell projection. It is found in the cilium. The protein localises to the flagellum. Necessary for sperm flagellar function. Plays a role in motile ciliogenesis. May help to recruit STK36 to the cilium or apical surface of the cell to initiate subsequent steps of construction of the central pair apparatus of motile cilia. In Mus musculus (Mouse), this protein is Sperm-associated antigen 16 protein (Spag16).